We begin with the raw amino-acid sequence, 189 residues long: MSIKSDKWIRRMAEEHNMIEPFAPNQVRATEDGRKIVSYGTSSYGYDIRCADEFKIFTNINSTIVDPKNFDEKSFVDFKGDVCIIPPNSFALARTVEYFRIPRSVLTVCLGKSTYARCGIIVNVTPFEPEWEGHVTLEFSNTTPLPAKIYANEGVAQVLFFESDEICDVSYADRGGKYQGQHGVTLPKT.

DCTP contacts are provided by residues lysine 112 to arginine 117, threonine 136 to glutamate 138, glutamine 157, tyrosine 171, and glutamine 181. Glutamate 138 acts as the Proton donor/acceptor in catalysis.

The protein belongs to the dCTP deaminase family. As to quaternary structure, homotrimer.

It carries out the reaction dCTP + H2O + H(+) = dUTP + NH4(+). It participates in pyrimidine metabolism; dUMP biosynthesis; dUMP from dCTP (dUTP route): step 1/2. Catalyzes the deamination of dCTP to dUTP. The chain is dCTP deaminase from Paraburkholderia phymatum (strain DSM 17167 / CIP 108236 / LMG 21445 / STM815) (Burkholderia phymatum).